The primary structure comprises 423 residues: Dihydrolipoyllysine-residue succinyltransferase component of 2-oxoglutarate dehydrogenase complex (423 aa).

A Lipoyl-binding domain is found at 1 to 76; sequence MPEVKVPELA…EVGQAIAVIG (76 aa). Residue Lys42 is modified to N6-lipoyllysine. Residues 76 to 185 are disordered; that stretch reads GEGSGNASKE…APAKEEKKYN (110 aa). The span at 80–96 shows a compositional bias: polar residues; the sequence is GNASKENSNDNTPQQND. Basic and acidic residues predominate over residues 99 to 115; it reads TNNKKEETTNKSADKAE. The span at 116–131 shows a compositional bias: polar residues; it reads VNQTNDDNQQRVNATP. Positions 128-164 constitute a Peripheral subunit-binding (PSBD) domain; sequence NATPSARRYARENGVNLAEVSPKTNDVVRKEDIDKKQ. Basic and acidic residues predominate over residues 153–164; sequence DVVRKEDIDKKQ. Low complexity predominate over residues 165 to 177; sequence QAPASTQTTQQAP. Active-site residues include His394 and Asp398.

It belongs to the 2-oxoacid dehydrogenase family. As to quaternary structure, forms a 24-polypeptide structural core with octahedral symmetry. Part of the 2-oxoglutarate dehydrogenase (OGDH) complex composed of E1 (2-oxoglutarate dehydrogenase), E2 (dihydrolipoamide succinyltransferase) and E3 (dihydrolipoamide dehydrogenase); the complex contains multiple copies of the three enzymatic components (E1, E2 and E3). It depends on (R)-lipoate as a cofactor.

It catalyses the reaction N(6)-[(R)-dihydrolipoyl]-L-lysyl-[protein] + succinyl-CoA = N(6)-[(R)-S(8)-succinyldihydrolipoyl]-L-lysyl-[protein] + CoA. The protein operates within amino-acid degradation; L-lysine degradation via saccharopine pathway; glutaryl-CoA from L-lysine: step 6/6. In terms of biological role, E2 component of the 2-oxoglutarate dehydrogenase (OGDH) complex which catalyzes the second step in the conversion of 2-oxoglutarate to succinyl-CoA and CO(2). This Staphylococcus aureus (strain MRSA252) protein is Dihydrolipoyllysine-residue succinyltransferase component of 2-oxoglutarate dehydrogenase complex (odhB).